We begin with the raw amino-acid sequence, 315 residues long: 1-aminocyclopropane-1-carboxylate oxidase 1 (315 aa).

A Fe2OG dioxygenase domain is found at 153 to 253 (PNFGTKVSNY…RMSLASFYNP (101 aa)). Positions 177, 179, and 234 each coordinate Fe cation.

It belongs to the iron/ascorbate-dependent oxidoreductase family. It depends on Fe cation as a cofactor. Predominantly expressed in the petals and the stigma and style.

It carries out the reaction 1-aminocyclopropane-1-carboxylate + L-ascorbate + O2 = ethene + L-dehydroascorbate + hydrogen cyanide + CO2 + 2 H2O. It participates in alkene biosynthesis; ethylene biosynthesis via S-adenosyl-L-methionine; ethylene from S-adenosyl-L-methionine: step 2/2. The polypeptide is 1-aminocyclopropane-1-carboxylate oxidase 1 (ACO1) (Solanum lycopersicum (Tomato)).